The following is a 394-amino-acid chain: 8-amino-7-oxononanoate synthase (394 aa).

Position 21 (Arg21) interacts with substrate. 112 to 113 (GY) contributes to the pyridoxal 5'-phosphate binding site. His137 contacts substrate. Pyridoxal 5'-phosphate is bound by residues Ser183, His211, and Thr239. Residue Lys242 is modified to N6-(pyridoxal phosphate)lysine. Thr358 is a binding site for substrate.

This sequence belongs to the class-II pyridoxal-phosphate-dependent aminotransferase family. BioF subfamily. As to quaternary structure, homodimer. The cofactor is pyridoxal 5'-phosphate.

The enzyme catalyses 6-carboxyhexanoyl-[ACP] + L-alanine + H(+) = (8S)-8-amino-7-oxononanoate + holo-[ACP] + CO2. The protein operates within cofactor biosynthesis; biotin biosynthesis. In terms of biological role, catalyzes the decarboxylative condensation of pimeloyl-[acyl-carrier protein] and L-alanine to produce 8-amino-7-oxononanoate (AON), [acyl-carrier protein], and carbon dioxide. The sequence is that of 8-amino-7-oxononanoate synthase from Paraburkholderia phymatum (strain DSM 17167 / CIP 108236 / LMG 21445 / STM815) (Burkholderia phymatum).